A 486-amino-acid chain; its full sequence is Glutamyl-tRNA(Gln) amidotransferase subunit A (486 aa).

Active-site charge relay system residues include Lys-79 and Ser-154. Ser-178 acts as the Acyl-ester intermediate in catalysis.

The protein belongs to the amidase family. GatA subfamily. In terms of assembly, heterotrimer of A, B and C subunits.

It carries out the reaction L-glutamyl-tRNA(Gln) + L-glutamine + ATP + H2O = L-glutaminyl-tRNA(Gln) + L-glutamate + ADP + phosphate + H(+). Allows the formation of correctly charged Gln-tRNA(Gln) through the transamidation of misacylated Glu-tRNA(Gln) in organisms which lack glutaminyl-tRNA synthetase. The reaction takes place in the presence of glutamine and ATP through an activated gamma-phospho-Glu-tRNA(Gln). The chain is Glutamyl-tRNA(Gln) amidotransferase subunit A from Dehalococcoides mccartyi (strain ATCC BAA-2100 / JCM 16839 / KCTC 5957 / BAV1).